The sequence spans 49 residues: Metallothionein (49 aa).

A beta region spans residues 1–16 (SCAGSCKCKNCRCRSC). A divalent metal cation contacts are provided by cysteine 2, cysteine 6, cysteine 8, cysteine 11, cysteine 13, cysteine 16, cysteine 20, cysteine 21, cysteine 23, cysteine 24, cysteine 28, cysteine 31, cysteine 35, cysteine 37, cysteine 45, cysteine 47, and cysteine 48. Residues 17–49 (RKSCCSCCPAGCNNCAKGCVCKEPASSKCSCCH) are alpha.

Belongs to the metallothionein superfamily. Type 1 family.

Its function is as follows. Metallothioneins have a high content of cysteine residues that bind various heavy metals. This is Metallothionein from Phasianus colchicus colchicus (Black-necked pheasant).